A 364-amino-acid polypeptide reads, in one-letter code: L-carnitine dehydrogenase (364 aa).

An NAD(+)-binding site is contributed by 11–16; that stretch reads GGGVIG. The segment at 336 to 364 is disordered; the sequence is KPAASTAAEKAKASKPVKKAEKPKKKKKG. Positions 348-364 are enriched in basic residues; it reads ASKPVKKAEKPKKKKKG.

The protein belongs to the 3-hydroxyacyl-CoA dehydrogenase family. L-carnitine dehydrogenase subfamily. Homodimer.

Its subcellular location is the cytoplasm. The catalysed reaction is carnitine + NAD(+) = 3-dehydrocarnitine + NADH + H(+). Its pathway is amine and polyamine metabolism; carnitine metabolism. Functionally, catalyzes the NAD(+)-dependent oxidation of L-carnitine to 3-dehydrocarnitine. The sequence is that of L-carnitine dehydrogenase from Mesorhizobium japonicum (strain LMG 29417 / CECT 9101 / MAFF 303099) (Mesorhizobium loti (strain MAFF 303099)).